Reading from the N-terminus, the 1029-residue chain is Toll-like receptor 9 (1029 aa).

A signal peptide spans 1-24 (MGPYCAPHPLSLLVQAAALAAALA). Residues 25 to 815 (EGTLPAFLPC…LCLDETLSLD (791 aa)) are Extracellular-facing. A disulfide bridge links Cys34 with Cys44. 46–50 (WLFLK) is a binding site for DNA. LRR repeat units lie at residues 61-84 (RANVTSLSLISNRIHHLHDSDFVH), 86-109 (SNLRVLNLKWNCPPAGLSPMHFPC), 121-146 (VPTLEELNLSYNGITTVPALPSSLVS), 149-165 (LSHTSILVLGPTHFTGL), 166-189 (HALRFLYMDGNCYYMNPCPRALEV), 197-220 (LGNLTHLSLKYNNLTEVPRRLPPS), 222-241 (DTLLLSYNHIVTLAPEDLAN), 242-267 (LTALRVLDVGGNCRRCDHARNPCREC), 282-305 (LSRLEGLVLKDSSLYKLEKDWFRG), 307-331 (GRLQVLDLSENFLYDYITKTTIFND), 332-355 (LTQLRRLNLSFNYHKKVSFAHLHL), 362-385 (LVSLEKLDMHGIFFRSLTNITLQS), 389-412 (LPKLQSLHLQLNFINQAQLSIFGA), 414-439 (PSLLFVDLSDNRISGAATPAAALGEV), 469-492 (CNLNFTLDLSRNNLVTIQQEMFTR), 494-517 (SRLQCLRLSHNSISQAVNGSQFVP), 518-541 (LTSLRVLDLSHNKLDLYHGRSFTE), 543-570 (PQLEALDLSYNSQPFSMQGVGHNLSFVA), 572-596 (LPSLRYLSLAHNGIHSRVSQKLSSA), 598-620 (LRALDFSGNSLSQMWAEGDLYLC), 625-648 (LRNLVQLDLSENHLHTLLPRHLDN), 650-673 (PKSLRQLRLRDNNLAFFNWSSLTV), 674-697 (LPRLEALDLAGNQLKALSNGSLPP), 699-721 (IRLQKLDVSSNSIGFVIPGFFVR), 722-745 (ATRLIELNLSANALKTVDPSWFGS), and 747-770 (AGTLKILDVSANPLHCACGAAFVD). Asn63 is a glycosylation site (N-linked (GlcNAc...) asparagine). DNA contacts are provided by residues 71–76 (SNRIHH) and 94–108 (KWNCPPAGLSPMHFP). An intrachain disulfide couples Cys97 to Cys109. N-linked (GlcNAc...) asparagine glycosylation is present at Asn128. Tyr131 is a DNA binding site. The cysteines at positions 177 and 183 are disulfide-linked. 178–180 (YYM) serves as a coordination point for DNA. An N-linked (GlcNAc...) asparagine glycan is attached at Asn199. DNA is bound at residue Tyr207. 2 N-linked (GlcNAc...) asparagine glycosylation sites follow: Asn209 and Asn241. 2 cysteine pairs are disulfide-bonded: Cys254/Cys267 and Cys257/Cys264. Residue Cys257 is the site of S-palmitoyl cysteine attachment. DNA is bound at residue Arg261. The S-palmitoyl cysteine moiety is linked to residue Cys264. Asn339 and Asn380 each carry an N-linked (GlcNAc...) asparagine glycan. Cys469 and Cys498 are joined by a disulfide. Residues Asn472 and Asn511 are each glycosylated (N-linked (GlcNAc...) asparagine). Asn565 is a glycosylation site (N-linked (GlcNAc...) asparagine). 2 N-linked (GlcNAc...) asparagine glycosylation sites follow: Asn667 and Asn692. An N-linked (GlcNAc...) asparagine glycan is attached at Asn729. Disulfide bonds link Cys762/Cys788 and Cys764/Cys807. The helical transmembrane segment at 816–836 (CFGLSLLMVALGLAVPMLHHL) threads the bilayer. The Cytoplasmic portion of the chain corresponds to 837 to 1029 (CGWDLWYCFH…NFCRGPTTAE (193 aa)). The TIR domain occupies 864 to 1009 (LLYDAVVVFD…SFWANLGIAL (146 aa)).

The protein belongs to the Toll-like receptor family. Monomer and homodimer. Exists as a monomer in the absence of unmethylated cytidine-phosphate-guanosine (CpG) ligand. Proteolytic processing of an insertion loop (Z-loop) is required for homodimerization upon binding to the unmethylated CpG ligand leading to its activation. Interacts with MYD88 via their respective TIR domains. Interacts with BTK. Interacts (via transmembrane domain) with UNC93B1. Interacts with CD300LH; the interaction may promote full activation of TLR9-triggered innate responses. Interacts with CNPY3 and HSP90B1; this interaction is required for proper folding in the endoplasmic reticulum. Interacts with SMPDL3B. Interacts with CD82; this interaction is essential for TLR9-dependent myddosome formation in response to CpG stimulation. In terms of processing, activated by proteolytic cleavage of the flexible loop between repeats LRR14 and LRR15 within the ectodomain. Cleavage requires UNC93B1. Proteolytically processed by first removing the majority of the ectodomain by either asparagine endopeptidase (AEP) or a cathepsin followed by a trimming event that is solely cathepsin mediated and required for optimal receptor signaling. Palmitoylated by ZDHHC3 in the Golgi regulates TLR9 trafficking from the Golgi to endosomes. Depalmitoylation by PPT1 controls the release of TLR9 from UNC93B1 in endosomes.

The protein localises to the endoplasmic reticulum membrane. It is found in the endosome. Its subcellular location is the lysosome. It localises to the cytoplasmic vesicle. The protein resides in the phagosome. Functionally, key component of innate and adaptive immunity. TLRs (Toll-like receptors) control host immune response against pathogens through recognition of molecular patterns specific to microorganisms. TLR9 is a nucleotide-sensing TLR which is activated by unmethylated cytidine-phosphate-guanosine (CpG) dinucleotides. Acts via MYD88 and TRAF6, leading to NF-kappa-B activation, cytokine secretion and the inflammatory response. Upon CpG stimulation, induces B-cell proliferation, activation, survival and antibody production. This Bos taurus (Bovine) protein is Toll-like receptor 9 (TLR9).